Reading from the N-terminus, the 394-residue chain is 8-amino-7-oxononanoate synthase (394 aa).

Arg-21 contacts substrate. Position 112–113 (112–113) interacts with pyridoxal 5'-phosphate; sequence GY. Substrate is bound at residue His-137. Residues Ser-183, His-211, and Thr-239 each coordinate pyridoxal 5'-phosphate. The residue at position 242 (Lys-242) is an N6-(pyridoxal phosphate)lysine. Thr-358 provides a ligand contact to substrate.

It belongs to the class-II pyridoxal-phosphate-dependent aminotransferase family. BioF subfamily. In terms of assembly, homodimer. Pyridoxal 5'-phosphate serves as cofactor.

It catalyses the reaction 6-carboxyhexanoyl-[ACP] + L-alanine + H(+) = (8S)-8-amino-7-oxononanoate + holo-[ACP] + CO2. It functions in the pathway cofactor biosynthesis; biotin biosynthesis. Functionally, catalyzes the decarboxylative condensation of pimeloyl-[acyl-carrier protein] and L-alanine to produce 8-amino-7-oxononanoate (AON), [acyl-carrier protein], and carbon dioxide. The polypeptide is 8-amino-7-oxononanoate synthase (Paraburkholderia phymatum (strain DSM 17167 / CIP 108236 / LMG 21445 / STM815) (Burkholderia phymatum)).